Here is a 468-residue protein sequence, read N- to C-terminus: 3-isopropylmalate dehydratase large subunit (468 aa).

The [4Fe-4S] cluster site is built by cysteine 347, cysteine 408, and cysteine 411.

The protein belongs to the aconitase/IPM isomerase family. LeuC type 1 subfamily. In terms of assembly, heterodimer of LeuC and LeuD. [4Fe-4S] cluster is required as a cofactor.

The catalysed reaction is (2R,3S)-3-isopropylmalate = (2S)-2-isopropylmalate. The protein operates within amino-acid biosynthesis; L-leucine biosynthesis; L-leucine from 3-methyl-2-oxobutanoate: step 2/4. In terms of biological role, catalyzes the isomerization between 2-isopropylmalate and 3-isopropylmalate, via the formation of 2-isopropylmaleate. This Janthinobacterium sp. (strain Marseille) (Minibacterium massiliensis) protein is 3-isopropylmalate dehydratase large subunit.